The following is a 122-amino-acid chain: Large ribosomal subunit protein uL14 (122 aa).

This sequence belongs to the universal ribosomal protein uL14 family. In terms of assembly, part of the 50S ribosomal subunit. Forms a cluster with proteins L3 and L19. In the 70S ribosome, L14 and L19 interact and together make contacts with the 16S rRNA in bridges B5 and B8.

Its function is as follows. Binds to 23S rRNA. Forms part of two intersubunit bridges in the 70S ribosome. The sequence is that of Large ribosomal subunit protein uL14 from Bacillus cytotoxicus (strain DSM 22905 / CIP 110041 / 391-98 / NVH 391-98).